Here is a 428-residue protein sequence, read N- to C-terminus: Adenylosuccinate synthetase (428 aa).

Residues 11–17 and 39–41 contribute to the GTP site; these read GDEGKGK and GHT. The Proton acceptor role is filled by D12. Mg(2+) contacts are provided by D12 and G39. Residues 12-15, 37-40, T130, R144, N226, T241, and R305 contribute to the IMP site; these read DEGK and NAGH. H40 (proton donor) is an active-site residue. 301–307 contacts substrate; it reads VTTGRKR. GTP-binding positions include R307, 333–335, and 415–417; these read KLD and GTG.

The protein belongs to the adenylosuccinate synthetase family. Homodimer. Requires Mg(2+) as cofactor.

The protein localises to the cytoplasm. It catalyses the reaction IMP + L-aspartate + GTP = N(6)-(1,2-dicarboxyethyl)-AMP + GDP + phosphate + 2 H(+). Its pathway is purine metabolism; AMP biosynthesis via de novo pathway; AMP from IMP: step 1/2. Functionally, plays an important role in the de novo pathway and in the salvage pathway of purine nucleotide biosynthesis. Catalyzes the first committed step in the biosynthesis of AMP from IMP. The sequence is that of Adenylosuccinate synthetase from Komagataella phaffii (strain GS115 / ATCC 20864) (Yeast).